Reading from the N-terminus, the 181-residue chain is Regulator of G-protein signaling 5 (181 aa).

An RGS domain is found at 64–180 (SLDKLLQNSY…VRSEFYKELI (117 aa)).

In terms of tissue distribution, expressed in heart and muscle.

Its subcellular location is the cytoplasm. It is found in the membrane. Functionally, inhibits signal transduction by increasing the GTPase activity of G protein alpha subunits thereby driving them into their inactive GDP-bound form. Binds to G(i)-alpha and G(o)-alpha, but not to G(s)-alpha. This Mus musculus (Mouse) protein is Regulator of G-protein signaling 5 (Rgs5).